The sequence spans 260 residues: MSQRTRLSVNVNKIAVLRNSRGHGAPDVIRAASACIDAGAHGITVHPRPDARHIRHDDVIRLSALTRARGVEFNIEGNPFAEPRAGYCGLLALCRETRPHQVTLVPDGDQQITSDHGFDFAREGPGLRPLIDEIKQWGCRVSLFVDVNVTGLADAAIWGVDRIELYTGPYAEMHHAGCSDAVLREFATTARLAQDVGLGVNAGHDLSQTNLGVFLGAVPDVLEVSIGHALISEALYEGLIPTVRRYLDILDSVNPAVSMR.

Positions 10 and 21 each coordinate 3-amino-2-oxopropyl phosphate. Histidine 46 functions as the Proton acceptor in the catalytic mechanism. 1-deoxy-D-xylulose 5-phosphate is bound by residues arginine 48 and histidine 53. Glutamate 76 functions as the Proton acceptor in the catalytic mechanism. Threonine 113 contacts 1-deoxy-D-xylulose 5-phosphate. Histidine 204 functions as the Proton donor in the catalytic mechanism. 3-amino-2-oxopropyl phosphate is bound by residues aspartate 205 and 227 to 228 (GH).

It belongs to the PNP synthase family. Homooctamer; tetramer of dimers.

Its subcellular location is the cytoplasm. It catalyses the reaction 3-amino-2-oxopropyl phosphate + 1-deoxy-D-xylulose 5-phosphate = pyridoxine 5'-phosphate + phosphate + 2 H2O + H(+). It functions in the pathway cofactor biosynthesis; pyridoxine 5'-phosphate biosynthesis; pyridoxine 5'-phosphate from D-erythrose 4-phosphate: step 5/5. Its function is as follows. Catalyzes the complicated ring closure reaction between the two acyclic compounds 1-deoxy-D-xylulose-5-phosphate (DXP) and 3-amino-2-oxopropyl phosphate (1-amino-acetone-3-phosphate or AAP) to form pyridoxine 5'-phosphate (PNP) and inorganic phosphate. This chain is Pyridoxine 5'-phosphate synthase, found in Xylella fastidiosa (strain M23).